A 685-amino-acid chain; its full sequence is Amino acid transporter heavy chain SLC3A1 (685 aa).

Basic and acidic residues predominate over residues 1-10 (MDEDKGKRDP). The disordered stretch occupies residues 1–53 (MDEDKGKRDPIQMSLKGCRTNNGFVQNEDIPEQDPDPGSRDTPQPNAVSIPAP). Topologically, residues 1-88 (MDEDKGKRDP…ARYRVPREIL (88 aa)) are cytoplasmic. Residues 89 to 109 (FWLTVVSVFLLIGATIAIIVI) traverse the membrane as a helical; Signal-anchor for type II membrane protein segment. Residues 110-685 (SPKCLDWWQA…SALDILYSSC (576 aa)) are Extracellular-facing. Residue Asn-213 coordinates Ca(2+). 3 N-linked (GlcNAc...) asparagine glycosylation sites follow: Asn-213, Asn-240, and Asn-260. Cys-241 and Cys-272 form a disulfide bridge. Ca(2+)-binding residues include Asp-283, Phe-317, Leu-318, and Glu-320. Asn-331 carries an N-linked (GlcNAc...) asparagine glycan. Residue Ser-385 is modified to Phosphoserine. N-linked (GlcNAc...) asparagine glycans are attached at residues Asn-512 and Asn-522. Disulfide bonds link Cys-570–Cys-666 and Cys-673–Cys-685.

In terms of assembly, disulfide-linked heterodimer composed of the catalytic light subunit SLC7A9 and the heavy subunit SLC3A1. The heterodimer is the minimal functional unit. Assembles in non-covalently linked heterotetramers (dimers of heterodimers) and higher order oligomers; the oligomerization is mediated by SLC3A1 likely to prevent degradation in the endoplasmic reticulum and facilitate heteromer trafficking to the plasma membrane. Disulfide-linked heterodimer composed of the catalytic light subunit SLC7A13 and the heavy subunit SLC3A1. As to expression, expressed in the brush border membrane in the kidney (at protein level). Highly expressed in renal tubules in the outer stripe of the outer medulla and medullary ray (at protein level). Also detected in the renal cortex. More abundant in male than female kidneys.

Its subcellular location is the cell membrane. It localises to the apical cell membrane. Its function is as follows. Acts as a chaperone that facilitates biogenesis and trafficking of functional transporter heteromers to the plasma membrane. Associates with SLC7A9 to form a functional transporter complex that mediates the electrogenic exchange between cationic amino acids and neutral amino acids, with a stoichiometry of 1:1. SLC7A9-SLC3A1 transporter has system b(0,+)-like activity with high affinity for extracellular cationic amino acids and L-cystine and lower affinity for intracellular neutral amino acids. Substrate exchange is driven by high concentration of intracellular neutral amino acids and the intracellular reduction of L-cystine to L-cysteine. SLC7A9-SLC3A1 acts as a major transporter for reabsorption of L-cystine and dibasic amino acids across the brush border membrane in early proximal tubules. Associates with SLC7A13 to form a functional complex that transports anionic and neutral amino acids via exchange or facilitated diffusion. SLC7A13-SLC3A1 may act as a major transporter for L-cystine in late proximal tubules, ensuring its reabsorption from the luminal fluid in exchange for cytosolic L-glutamate or L-aspartate. The chain is Amino acid transporter heavy chain SLC3A1 from Mus musculus (Mouse).